Reading from the N-terminus, the 1032-residue chain is UPF0182 protein sll1060 (1032 aa).

9 helical membrane-spanning segments follow: residues 27-49 (WVKGAIVLAIALVGLEVIARIYV), 69-87 (WQGSIALITGFISWGFIVF), 144-166 (VLLPLIIVLQLILISLVMYYVFI), 197-219 (FSGMGSQLGVTALAGMLALIGVL), 226-248 (PGLVFILSAVWGLLLSGNWFRLL), 283-300 (WWRGLFLFSLLGVTLIIL), 321-339 (HISALGAAVALTLGVEHWL), 364-386 (LPVETGLAIFSMAIAIWLGWLSV), and 406-428 (IIGLWLPVAVYLLILLLQNLGGW).

The protein belongs to the UPF0182 family.

Its subcellular location is the cell membrane. The chain is UPF0182 protein sll1060 from Synechocystis sp. (strain ATCC 27184 / PCC 6803 / Kazusa).